Here is a 326-residue protein sequence, read N- to C-terminus: Putative ABC transporter ATP-binding protein MA_4020 (326 aa).

Positions 1–12 (MTISTLSSSYGN) are enriched in polar residues. Residues 1-34 (MTISTLSSSYGNAQDVPAEDSDRHGSIEPGSEKA) are disordered. An ABC transporter domain is found at 46-281 (LEVKNLCHRY…PELLRKAHLR (236 aa)). Residue 80-87 (GANGAGKS) coordinates ATP.

This sequence belongs to the ABC transporter superfamily.

Its subcellular location is the cell membrane. Functionally, probably part of an ABC transporter complex. Responsible for energy coupling to the transport system. In Methanosarcina acetivorans (strain ATCC 35395 / DSM 2834 / JCM 12185 / C2A), this protein is Putative ABC transporter ATP-binding protein MA_4020.